We begin with the raw amino-acid sequence, 726 residues long: Catalase-peroxidase (726 aa).

A disordered region spans residues 1-33; it reads MSTSDDIHNTTATGKCPFHQGGHDQSAGAGTTT. Residues 105–226 constitute a cross-link (tryptophyl-tyrosyl-methioninium (Trp-Tyr) (with M-252)); sequence WHGAGTYRSI…LGATEMGLIY (122 aa). His106 (proton acceptor) is an active-site residue. Residues 226-252 constitute a cross-link (tryptophyl-tyrosyl-methioninium (Tyr-Met) (with W-105)); that stretch reads YVNPEGPDHSGEPLSAAAAIRATFGNM. His267 is a heme b binding site.

Belongs to the peroxidase family. Peroxidase/catalase subfamily. Homodimer or homotetramer. Requires heme b as cofactor. Post-translationally, formation of the three residue Trp-Tyr-Met cross-link is important for the catalase, but not the peroxidase activity of the enzyme.

It carries out the reaction H2O2 + AH2 = A + 2 H2O. The catalysed reaction is 2 H2O2 = O2 + 2 H2O. Functionally, bifunctional enzyme with both catalase and broad-spectrum peroxidase activity. This chain is Catalase-peroxidase, found in Shigella boydii serotype 4 (strain Sb227).